The following is a 397-amino-acid chain: Succinate--CoA ligase [ADP-forming] subunit beta (397 aa).

One can recognise an ATP-grasp domain in the interval 9-254 (KALLREFGVP…ESEEDAKEIE (246 aa)). Residues lysine 46, 53–55 (GRG), glutamate 109, serine 112, and glutamate 117 contribute to the ATP site. Residues asparagine 209 and aspartate 223 each contribute to the Mg(2+) site. Substrate contacts are provided by residues asparagine 274 and 331-333 (GIM).

This sequence belongs to the succinate/malate CoA ligase beta subunit family. In terms of assembly, heterotetramer of two alpha and two beta subunits. It depends on Mg(2+) as a cofactor.

It carries out the reaction succinate + ATP + CoA = succinyl-CoA + ADP + phosphate. The enzyme catalyses GTP + succinate + CoA = succinyl-CoA + GDP + phosphate. It functions in the pathway carbohydrate metabolism; tricarboxylic acid cycle; succinate from succinyl-CoA (ligase route): step 1/1. In terms of biological role, succinyl-CoA synthetase functions in the citric acid cycle (TCA), coupling the hydrolysis of succinyl-CoA to the synthesis of either ATP or GTP and thus represents the only step of substrate-level phosphorylation in the TCA. The beta subunit provides nucleotide specificity of the enzyme and binds the substrate succinate, while the binding sites for coenzyme A and phosphate are found in the alpha subunit. This chain is Succinate--CoA ligase [ADP-forming] subunit beta, found in Nitrobacter hamburgensis (strain DSM 10229 / NCIMB 13809 / X14).